The primary structure comprises 198 residues: Protein GrpE (198 aa).

Positions 1–27 are enriched in basic and acidic residues; sequence MEERNEQVVEETKEAQTEEATIEKNSE. Positions 1 to 39 are disordered; it reads MEERNEQVVEETKEAQTEEATIEKNSEESVTEEATEETV. Residues 29 to 39 show a composition bias toward acidic residues; that stretch reads SVTEEATEETV.

The protein belongs to the GrpE family. Homodimer.

It is found in the cytoplasm. In terms of biological role, participates actively in the response to hyperosmotic and heat shock by preventing the aggregation of stress-denatured proteins, in association with DnaK and GrpE. It is the nucleotide exchange factor for DnaK and may function as a thermosensor. Unfolded proteins bind initially to DnaJ; upon interaction with the DnaJ-bound protein, DnaK hydrolyzes its bound ATP, resulting in the formation of a stable complex. GrpE releases ADP from DnaK; ATP binding to DnaK triggers the release of the substrate protein, thus completing the reaction cycle. Several rounds of ATP-dependent interactions between DnaJ, DnaK and GrpE are required for fully efficient folding. The polypeptide is Protein GrpE (Bacillus cytotoxicus (strain DSM 22905 / CIP 110041 / 391-98 / NVH 391-98)).